Consider the following 219-residue polypeptide: Putative zinc metalloprotease YwhC (219 aa).

A helical transmembrane segment spans residues 4 to 24 (FLYYPLSLMPYLVITLIVSFT). His-26 is a Zn(2+) binding site. Glu-27 is an active-site residue. His-30 serves as a coordination point for Zn(2+). The next 4 helical transmembrane spans lie at 52–72 (PIKH…FGWA), 94–114 (IAGP…LVLM), 132–152 (FFSI…LPLP), and 180–200 (FIVF…WPML).

Belongs to the peptidase M50B family. Zn(2+) serves as cofactor.

It localises to the cell membrane. The sequence is that of Putative zinc metalloprotease YwhC (ywhC) from Bacillus subtilis (strain 168).